The chain runs to 421 residues: Enolase (421 aa).

Residue Gln-165 participates in (2R)-2-phosphoglycerate binding. Glu-207 acts as the Proton donor in catalysis. Residues Asp-244, Glu-285, and Asp-312 each coordinate Mg(2+). (2R)-2-phosphoglycerate contacts are provided by Lys-337, Arg-366, Ser-367, and Lys-388. Lys-337 acts as the Proton acceptor in catalysis.

Belongs to the enolase family. It depends on Mg(2+) as a cofactor.

It is found in the cytoplasm. The protein localises to the secreted. The protein resides in the cell surface. It carries out the reaction (2R)-2-phosphoglycerate = phosphoenolpyruvate + H2O. It participates in carbohydrate degradation; glycolysis; pyruvate from D-glyceraldehyde 3-phosphate: step 4/5. Catalyzes the reversible conversion of 2-phosphoglycerate (2-PG) into phosphoenolpyruvate (PEP). It is essential for the degradation of carbohydrates via glycolysis. The sequence is that of Enolase from Ehrlichia chaffeensis (strain ATCC CRL-10679 / Arkansas).